Reading from the N-terminus, the 670-residue chain is DNA ligase (670 aa).

NAD(+) contacts are provided by residues 34–38 (DAEYD), 84–85 (SL), 116–119 (EHKV), Arg139, Glu174, Tyr226, Lys291, and Lys315. Lys118 serves as the catalytic N6-AMP-lysine intermediate. Positions 409, 412, 425, and 430 each coordinate Zn(2+). The region spanning 586–670 (EVSDLLSGLT…LKEKGAPVPA (85 aa)) is the BRCT domain.

The protein belongs to the NAD-dependent DNA ligase family. LigA subfamily. Mg(2+) is required as a cofactor.

It catalyses the reaction NAD(+) + (deoxyribonucleotide)n-3'-hydroxyl + 5'-phospho-(deoxyribonucleotide)m = (deoxyribonucleotide)n+m + AMP + beta-nicotinamide D-nucleotide.. In terms of biological role, DNA ligase that catalyzes the formation of phosphodiester linkages between 5'-phosphoryl and 3'-hydroxyl groups in double-stranded DNA using NAD as a coenzyme and as the energy source for the reaction. It is essential for DNA replication and repair of damaged DNA. This is DNA ligase from Thermus filiformis.